The following is a 336-amino-acid chain: Dihydroorotate dehydrogenase (quinone) (336 aa).

FMN-binding positions include Ala-62–Lys-66 and Thr-86. Lys-66 contacts substrate. Asn-111–Phe-115 contributes to the substrate binding site. The FMN site is built by Asn-139 and Asn-172. Asn-172 contributes to the substrate binding site. Ser-175 acts as the Nucleophile in catalysis. Residue Asn-177 coordinates substrate. 2 residues coordinate FMN: Lys-217 and Thr-245. Residue Asn-246 to Thr-247 participates in substrate binding. FMN contacts are provided by residues Gly-268, Gly-297, and Tyr-318 to Ser-319.

Belongs to the dihydroorotate dehydrogenase family. Type 2 subfamily. In terms of assembly, monomer. FMN serves as cofactor.

It localises to the cell membrane. It catalyses the reaction (S)-dihydroorotate + a quinone = orotate + a quinol. It participates in pyrimidine metabolism; UMP biosynthesis via de novo pathway; orotate from (S)-dihydroorotate (quinone route): step 1/1. Functionally, catalyzes the conversion of dihydroorotate to orotate with quinone as electron acceptor. This chain is Dihydroorotate dehydrogenase (quinone), found in Aeromonas salmonicida (strain A449).